The primary structure comprises 453 residues: MLADLPIALNPHEPTSIPTQLTEQIRRLVARGILTPGDPLPSSRSLSTQLGVSRGSVVTAYDQLAGEGYLSTARGSGTTINPDLHLLKPVEIEKKETSRSVPPPLLNLSPGVPDTATLADSAWRAAWREACAKPPTHSPEQGLLRLRIEIADHLRQMRGLMVEPEQIIVTAGAREGLSLLLRTMDAPARIGVESPGYPSLRRIPQVLGHETIDVPTDESGLVPRALPHDLNALLVTPSHQYPYGGSLPADRRTALVAWAEANDALLIEDDFDSELRYVGMPLPPLRALAPDRTILLGTFSSVITPQVACGYLIAPTPQARVLATLRGILGQPVGAITQHALASYLASGALRRRTQRLRRLYRHRRSIVQDTLGDLPNTQLRPINGGLHAVLLCDKPQDLVVTTLASRGLNVTALSHYWGGTGADNGIVFGFGSHDEDTLRWVLAEISDAVSLG.

The 69-residue stretch at 15–83 folds into the HTH gntR-type domain; that stretch reads TSIPTQLTEQ…RGSGTTINPD (69 aa). The H-T-H motif DNA-binding region spans 43-62; it reads SRSLSTQLGVSRGSVVTAYD.

The protein in the C-terminal section; belongs to the class-I pyridoxal-phosphate-dependent aminotransferase family. Pyridoxal 5'-phosphate serves as cofactor.

In terms of biological role, may have a regulatory function in pyridoxine biosynthesis. Is said to also have an aminotransferase activity in valine biosynthesis as a double inactivation of ilvE and pdxR results in an auxotrophic requirement for valine. In Corynebacterium glutamicum (strain ATCC 13032 / DSM 20300 / JCM 1318 / BCRC 11384 / CCUG 27702 / LMG 3730 / NBRC 12168 / NCIMB 10025 / NRRL B-2784 / 534), this protein is HTH-type pyridoxine biosynthesis transcriptional regulator PdxR (pdxR).